Here is a 493-residue protein sequence, read N- to C-terminus: N-acetylglucosamine kinase 1 (493 aa).

The 464-residue stretch at 27–490 folds into the Hexokinase domain; that stretch reads ESSVLSSIVE…SIIGAAIGAA (464 aa). The segment at 79-221 is hexokinase small subdomain; the sequence is TGDEHGQYLV…GLTLDVQSIL (143 aa). The segment at 222–479 is hexokinase large subdomain; the sequence is NDSLAVYSAG…IKVDLKLIEN (258 aa).

It belongs to the hexokinase family. In terms of assembly, interacts with histone deacetylase SIR2 under filamentation-inducing conditions.

It localises to the cytoplasm. Its subcellular location is the nucleus. The protein localises to the mitochondrion. It catalyses the reaction N-acetyl-D-glucosamine + ATP = N-acetyl-D-glucosamine 6-phosphate + ADP + H(+). It carries out the reaction D-mannose + ATP = D-mannose 6-phosphate + ADP + H(+). The catalysed reaction is D-glucose + ATP = D-glucose 6-phosphate + ADP + H(+). The enzyme catalyses D-glucosamine + ATP = D-glucosamine 6-phosphate + ADP + H(+). The protein operates within carbohydrate metabolism; hexose metabolism. It functions in the pathway carbohydrate degradation; glycolysis; D-glyceraldehyde 3-phosphate and glycerone phosphate from D-glucose: step 1/4. In terms of biological role, component of the N-acetylglucosamine catabolic cascade that phosphorylates N-acetylglucosamine (GlcNAc), and allows the unique ability to utilise GlcNAc as carbon source. Converts GlcNAc to GlcNAc-6-P. Also able to phosphorylate glucose, glucosamine (GlcN), and mannose. Galactose, fructose, N-acetylmannosamine (ManNAc), mannosamine (ManN), galactosamine (GalN), and N-acetylgalactosamine (GalNAc) are not phosphorylated by HXK1. GlcNAc metabolism is closely associated with virulence and morphogenesis, and is involved in the cell wall synthesis. Acts both as a repressor and an activator of genes involved in maintaining cellular homeostasis. Contributes to white-opaque morphological transition and plays a role as a filamentation repressor. The chain is N-acetylglucosamine kinase 1 from Candida albicans (strain SC5314 / ATCC MYA-2876) (Yeast).